A 194-amino-acid chain; its full sequence is Small ribosomal subunit protein eS7 (194 aa).

This sequence belongs to the eukaryotic ribosomal protein eS7 family.

The chain is Small ribosomal subunit protein eS7 (RpS7) from Drosophila yakuba (Fruit fly).